The sequence spans 417 residues: MIRSFIRSSALLLALLPVTGYSAGPLILVGGGLKDDNTAIYQRLIQLAGGNGQARIGVITAASIPESDDPDAGTADAANSKANGEFYAQLLETYGAADAQWIPIDLDQISNNSNPQVVAQINSMTGFFFGGGDQSRLTQTLQTATRADSPALAAIRARHNAGAVLAGTSAGTAIMVQGPMVTGGESYDGLRYGVYTTPSGDDLSYDMQGGFGFFNYGLLDTHFSERGRQGRIVRLADHTQVPFAFGVDENTALLVQNNATLGQVEMEVIGENGVFIFDLRNKERGTGSTYALYDVLGSYLTAGDRYRPVTGQFVIASGKTSLRGRERYSAAMTVTTDIFSSPNNSGANGRRKPREFVKVSADLFDSRVTSTLGRTYETNPLSRRSVQKHAVRQPWLPGHRWRQEHAVLPAFADGFPS.

A signal peptide spans 1–23; the sequence is MIRSFIRSSALLLALLPVTGYSA. Residues Ser169, Asp188, and His222 each act as charge relay system in the active site.

It belongs to the peptidase S51 family.

It is found in the secreted. The enzyme catalyses [L-4-(L-arginin-2-N-yl)aspartate](n) + H2O = [L-4-(L-arginin-2-N-yl)aspartate](n-1) + L-4-(L-arginin-2-N-yl)aspartate. Its activity is regulated as follows. Inhibited by serine protease inhibitors. Inhibited by N-Bromo-succinimide. In terms of biological role, exopeptidase that catalyzes the hydrolytic cleavage of multi-L-arginyl-poly-L-aspartic acid (cyanophycin; a water-insoluble reserve polymer) into aspartate-arginine dipeptides. In Pseudomonas anguilliseptica, this protein is Cyanophycinase (cphE).